The chain runs to 185 residues: Elongation factor P (185 aa).

The protein belongs to the elongation factor P family.

It localises to the cytoplasm. It functions in the pathway protein biosynthesis; polypeptide chain elongation. Involved in peptide bond synthesis. Stimulates efficient translation and peptide-bond synthesis on native or reconstituted 70S ribosomes in vitro. Probably functions indirectly by altering the affinity of the ribosome for aminoacyl-tRNA, thus increasing their reactivity as acceptors for peptidyl transferase. This chain is Elongation factor P, found in Bacillus cereus (strain 03BB102).